A 352-amino-acid chain; its full sequence is Glycogen synthase kinase 3 (352 aa).

The Protein kinase domain maps to 20-310 (YTVERVAGQG…PLDALCHPFF (291 aa)). ATP contacts are provided by residues 26 to 34 (AGQGTFGTV) and Lys49. Asp152 serves as the catalytic Proton acceptor.

It belongs to the protein kinase superfamily. CMGC Ser/Thr protein kinase family. GSK-3 subfamily. In terms of assembly, inhibited by cyclin kinase 2 (CDK2) inhibitors, including GW8510.

The enzyme catalyses L-seryl-[tau protein] + ATP = O-phospho-L-seryl-[tau protein] + ADP + H(+). It catalyses the reaction L-threonyl-[tau protein] + ATP = O-phospho-L-threonyl-[tau protein] + ADP + H(+). This chain is Glycogen synthase kinase 3, found in Trypanosoma brucei brucei (strain 927/4 GUTat10.1).